The chain runs to 54 residues: MSFITLNNFFNTNTFFGLLPEQYAPFDPLIDVLPIIPVLFFLLAFVWQASVKFR.

A propeptide spanning residues Met-1–Gly-17 is cleaved from the precursor. The chain crosses the membrane as a helical span at residues Leu-29–Ala-49.

Belongs to the PsbK family. As to quaternary structure, PSII is composed of 1 copy each of membrane proteins PsbA, PsbB, PsbC, PsbD, PsbE, PsbF, PsbH, PsbI, PsbJ, PsbK, PsbL, PsbM, PsbT, PsbY, PsbZ, Psb30/Ycf12, at least 3 peripheral proteins of the oxygen-evolving complex and a large number of cofactors. It forms dimeric complexes.

It localises to the plastid. Its subcellular location is the chloroplast thylakoid membrane. Functionally, one of the components of the core complex of photosystem II (PSII). PSII is a light-driven water:plastoquinone oxidoreductase that uses light energy to abstract electrons from H(2)O, generating O(2) and a proton gradient subsequently used for ATP formation. It consists of a core antenna complex that captures photons, and an electron transfer chain that converts photonic excitation into a charge separation. This chain is Photosystem II reaction center protein K, found in Euglena gracilis.